A 247-amino-acid chain; its full sequence is Granzyme B (247 aa).

An N-terminal signal peptide occupies residues 1-18; sequence MQPILLLLAFLLLPRADA. Residues 19–20 constitute a propeptide, activation peptide; it reads GE. One can recognise a Peptidase S1 domain in the interval 21-245; that stretch reads IIGGHEAKPH…FVHWIKKTMK (225 aa). Cys49 and Cys65 are oxidised to a cystine. His64 functions as the Charge relay system in the catalytic mechanism. Asn71 and Asn104 each carry an N-linked (GlcNAc...) asparagine glycan. The Charge relay system role is filled by Asp108. 2 cysteine pairs are disulfide-bonded: Cys142–Cys209 and Cys173–Cys188. Ser203 acts as the Charge relay system in catalysis.

Belongs to the peptidase S1 family. Granzyme subfamily.

Its subcellular location is the secreted. It is found in the cytolytic granule. It catalyses the reaction Preferential cleavage: -Asp-|-Xaa- &gt;&gt; -Asn-|-Xaa- &gt; -Met-|-Xaa-, -Ser-|-Xaa-.. Its activity is regulated as follows. Inactivated by the serine protease inhibitor diisopropylfluorophosphate. Its function is as follows. Abundant protease in the cytosolic granules of cytotoxic T-cells and NK-cells which activates caspase-independent pyroptosis when delivered into the target cell through the immunological synapse. It cleaves after Asp. Once delivered into the target cell, acts by catalyzing cleavage of gasdermin-E (GSDME), releasing the pore-forming moiety of GSDME, thereby triggering pyroptosis and target cell death. Seems to be linked to an activation cascade of caspases (aspartate-specific cysteine proteases) responsible for apoptosis execution. Cleaves caspase-3, -9 and -10 (CASP3, CASP9 and CASP10, respectively) to give rise to active enzymes mediating apoptosis. Cleaves and activates CASP7 in response to bacterial infection, promoting plasma membrane repair. This chain is Granzyme B, found in Homo sapiens (Human).